Reading from the N-terminus, the 472-residue chain is Pyruvate kinase (472 aa).

Residue R33 participates in substrate binding. Residues N35, S37, and D67 each contribute to the K(+) site. Position 35–38 (35–38 (NFSH)) interacts with ATP. The ATP site is built by R74 and K155. Position 220 (E220) interacts with Mg(2+). Positions 243, 244, and 276 each coordinate substrate. D244 is a Mg(2+) binding site.

The protein belongs to the pyruvate kinase family. In terms of assembly, homotetramer. Requires Mg(2+) as cofactor. It depends on K(+) as a cofactor.

The catalysed reaction is pyruvate + ATP = phosphoenolpyruvate + ADP + H(+). It participates in carbohydrate degradation; glycolysis; pyruvate from D-glyceraldehyde 3-phosphate: step 5/5. This chain is Pyruvate kinase (pyk), found in Mycobacterium tuberculosis (strain CDC 1551 / Oshkosh).